We begin with the raw amino-acid sequence, 153 residues long: Ribosome maturation factor RimP (153 aa).

The protein belongs to the RimP family.

It localises to the cytoplasm. Its function is as follows. Required for maturation of 30S ribosomal subunits. The chain is Ribosome maturation factor RimP from Clostridium botulinum (strain ATCC 19397 / Type A).